The primary structure comprises 241 residues: Small ribosomal subunit protein uS3 (241 aa).

Residues 39-107 (MRKFVMDELK…ETHLNIVEVR (69 aa)) enclose the KH type-2 domain. The disordered stretch occupies residues 214–241 (ASERRALEGDAQGPASRDRDRDRRRDNA). Residues 229–241 (SRDRDRDRRRDNA) show a composition bias toward basic and acidic residues.

The protein belongs to the universal ribosomal protein uS3 family. In terms of assembly, part of the 30S ribosomal subunit. Forms a tight complex with proteins S10 and S14.

Its function is as follows. Binds the lower part of the 30S subunit head. Binds mRNA in the 70S ribosome, positioning it for translation. This Rhizobium rhizogenes (strain K84 / ATCC BAA-868) (Agrobacterium radiobacter) protein is Small ribosomal subunit protein uS3.